The chain runs to 169 residues: Peptide methionine sulfoxide reductase MsrA (169 aa).

Residue Cys10 is part of the active site.

It belongs to the MsrA Met sulfoxide reductase family.

The enzyme catalyses L-methionyl-[protein] + [thioredoxin]-disulfide + H2O = L-methionyl-(S)-S-oxide-[protein] + [thioredoxin]-dithiol. It carries out the reaction [thioredoxin]-disulfide + L-methionine + H2O = L-methionine (S)-S-oxide + [thioredoxin]-dithiol. Its function is as follows. Has an important function as a repair enzyme for proteins that have been inactivated by oxidation. Catalyzes the reversible oxidation-reduction of methionine sulfoxide in proteins to methionine. This Streptococcus pyogenes serotype M6 (strain ATCC BAA-946 / MGAS10394) protein is Peptide methionine sulfoxide reductase MsrA.